Consider the following 581-residue polypeptide: Ketol-acid reductoisomerase, chloroplastic (581 aa).

A chloroplast-targeting transit peptide spans 1 to 50 (MAAVTSSCSTAISASSKTLAKPVAASFAPTNLSFSKLSPQSIRARRSITV). Residues 92–290 (VRGGRDLFHL…ALGSPFTFAT (199 aa)) form the KARI N-terminal Rossmann domain. Residues 113–120 (GVIGWGSQ), 146–151 (RKGSSS), and 185–189 (SDSAQ) contribute to the NADP(+) site. Residue His210 is part of the active site. KARI C-terminal knotted domains lie at 291–439 (TLEQ…RPAG) and 440–576 (DLGP…RPEL). Residues Asp299, Glu303, Glu476, and Glu480 each coordinate Mg(2+). Residue Ser502 coordinates substrate.

It belongs to the ketol-acid reductoisomerase family. Homodimer. Mg(2+) is required as a cofactor.

The protein resides in the plastid. The protein localises to the chloroplast. The catalysed reaction is (2R)-2,3-dihydroxy-3-methylbutanoate + NADP(+) = (2S)-2-acetolactate + NADPH + H(+). It catalyses the reaction (2R,3R)-2,3-dihydroxy-3-methylpentanoate + NADP(+) = (S)-2-ethyl-2-hydroxy-3-oxobutanoate + NADPH + H(+). The protein operates within amino-acid biosynthesis; L-isoleucine biosynthesis; L-isoleucine from 2-oxobutanoate: step 2/4. It functions in the pathway amino-acid biosynthesis; L-valine biosynthesis; L-valine from pyruvate: step 2/4. This is Ketol-acid reductoisomerase, chloroplastic (PGAAIR) from Pisum sativum (Garden pea).